The primary structure comprises 254 residues: MLAKRIIPCLDVTAGRVVKGVNFVGLRDAGDPVEIARRYNEQGADELTFLDITASSDARDIILHVIEAVAEQVFIPLTVGGGVRQVEDVRRLLNAGADKVSINTSAVTHPELVAEAAGRFGSQAIVVAVDAKAVTPDNDRWEVFTHGGRKPTGLDAVEWARKMQELGAGEILLTSMDRDGTRIGFNLALTRAVSDAVDIPVIASGGVGNLQHLVDGIKEGHADAVLAASIFHFGDYTVRQAKELMQSQGIEVRL.

Active-site residues include Asp11 and Asp130.

Belongs to the HisA/HisF family. Heterodimer of HisH and HisF.

It is found in the cytoplasm. The enzyme catalyses 5-[(5-phospho-1-deoxy-D-ribulos-1-ylimino)methylamino]-1-(5-phospho-beta-D-ribosyl)imidazole-4-carboxamide + L-glutamine = D-erythro-1-(imidazol-4-yl)glycerol 3-phosphate + 5-amino-1-(5-phospho-beta-D-ribosyl)imidazole-4-carboxamide + L-glutamate + H(+). Its pathway is amino-acid biosynthesis; L-histidine biosynthesis; L-histidine from 5-phospho-alpha-D-ribose 1-diphosphate: step 5/9. In terms of biological role, IGPS catalyzes the conversion of PRFAR and glutamine to IGP, AICAR and glutamate. The HisF subunit catalyzes the cyclization activity that produces IGP and AICAR from PRFAR using the ammonia provided by the HisH subunit. This Laribacter hongkongensis (strain HLHK9) protein is Imidazole glycerol phosphate synthase subunit HisF.